The chain runs to 918 residues: Importin subunit beta-2 (918 aa).

HEAT repeat units lie at residues 11-38, 43-92, 103-137, 145-181, 190-222, 235-263, 275-303, 320-413, 421-449, 461-488, 501-534, 542-577, 583-620, 628-678, 694-725, 777-814, 825-858, and 867-900; these read YVLQ…EAME, QPEF…GGNN, YVKS…TYYR, GLQM…FQLE, EALL…TVIP, FLEI…SFLL, DGIV…FLHA, KDIV…MTNI, IAFP…GAMA, PALI…TLSR, LIPV…IENA, LFYS…AEKC, AMQI…SSLG, PEVY…GLGA, ILKI…YFFN, IDMS…LTHP, DSNW…INLT, and DTIH…SAQI. The disordered stretch occupies residues 361-395; sequence APRIVKKKEAGNGEDADDNEDDDDDDDDEDGDVDT. Residues 372–393 are compositionally biased toward acidic residues; it reads NGEDADDNEDDDDDDDDEDGDV.

This sequence belongs to the importin beta family. Importin beta-2 subfamily. In terms of assembly, interacts with Ran (GSP1); interacts specifically with the GTP-bound form of Ran (GTP-Ran), protecting it from GTP hydrolysis and nucleotide exchange. Interacts with nucleoporins NUP1, NUP100 and NUP116. Interacts with NAB2 and HRP1/NAB4; via their rg-NLS. Interacts with TFG2; via its PY-NLS.

It localises to the cytoplasm. It is found in the nucleus. Its subcellular location is the nuclear pore complex. Its function is as follows. Functions in nuclear protein import as nuclear transport receptor. Serves as receptor for arginine/glycine-rich nuclear localization signals (rg-NLS) and PY-NLS in cargo substrates. Its predominant cargo substrate seems to be mRNA-binding proteins. Required for nuclear transport of NAB2, HRP1/NAB4 and TFG2. Mediates docking of the importin/substrate complex to the nuclear pore complex (NPC) through binding to repeat-containing nucleoporins. The complex is subsequently translocated through the pore by an energy requiring, Ran-dependent mechanism. At the nucleoplasmic side of the NPC, GTP-Ran binding leads to release of the cargo. Efficient GTP-Ran-mediated substrate release requires RNA. The importin is re-exported from the nucleus to the cytoplasm where GTP hydrolysis releases Ran from importin. The directionality of nuclear import is thought to be conferred by an asymmetric distribution of the GTP- and GDP-bound forms of Ran between the cytoplasm and nucleus. This is Importin subunit beta-2 from Saccharomyces cerevisiae (strain ATCC 204508 / S288c) (Baker's yeast).